We begin with the raw amino-acid sequence, 887 residues long: Alanine--tRNA ligase (887 aa).

A compositionally biased stretch (basic and acidic residues) spans 425–441 (MQEQKSRARSDRREKQQ). The segment at 425 to 448 (MQEQKSRARSDRREKQQTGDGAGS) is disordered. Zn(2+)-binding residues include histidine 569, histidine 573, cysteine 672, and histidine 676.

The protein belongs to the class-II aminoacyl-tRNA synthetase family. Zn(2+) serves as cofactor.

Its subcellular location is the cytoplasm. The catalysed reaction is tRNA(Ala) + L-alanine + ATP = L-alanyl-tRNA(Ala) + AMP + diphosphate. In terms of biological role, catalyzes the attachment of alanine to tRNA(Ala) in a two-step reaction: alanine is first activated by ATP to form Ala-AMP and then transferred to the acceptor end of tRNA(Ala). Also edits incorrectly charged Ser-tRNA(Ala) and Gly-tRNA(Ala) via its editing domain. The sequence is that of Alanine--tRNA ligase from Chlorobium luteolum (strain DSM 273 / BCRC 81028 / 2530) (Pelodictyon luteolum).